Consider the following 105-residue polypeptide: Large ribosomal subunit protein bL21 (105 aa).

The protein belongs to the bacterial ribosomal protein bL21 family. As to quaternary structure, part of the 50S ribosomal subunit. Contacts protein L20.

This protein binds to 23S rRNA in the presence of protein L20. The sequence is that of Large ribosomal subunit protein bL21 from Phocaeicola vulgatus (strain ATCC 8482 / DSM 1447 / JCM 5826 / CCUG 4940 / NBRC 14291 / NCTC 11154) (Bacteroides vulgatus).